The chain runs to 180 residues: Translation initiation factor IF-3 (180 aa).

It belongs to the IF-3 family. In terms of assembly, monomer.

The protein resides in the cytoplasm. In terms of biological role, IF-3 binds to the 30S ribosomal subunit and shifts the equilibrium between 70S ribosomes and their 50S and 30S subunits in favor of the free subunits, thus enhancing the availability of 30S subunits on which protein synthesis initiation begins. The polypeptide is Translation initiation factor IF-3 (Xylella fastidiosa (strain Temecula1 / ATCC 700964)).